A 76-amino-acid chain; its full sequence is MRHCACLFHLFLIGFLCNVYFSACTHTSSLKESDDESPRAEHWGSDGKRILRANDSEFLLTEERILLILLWSPLGR.

Residues 1–24 form the signal peptide; sequence MRHCACLFHLFLIGFLCNVYFSAC. The RxLR-dEER signature appears at 49-64; that stretch reads RILRANDSEFLLTEER. N-linked (GlcNAc...) asparagine glycosylation occurs at Asn54.

It belongs to the RxLR effector family.

It is found in the secreted. The protein resides in the host nucleus. The protein localises to the host cytoplasm. Its function is as follows. Secreted effector that dos not suppress the host cell death induced by cell death-inducing proteins. The protein is Secreted RxLR effector protein 31 of Plasmopara viticola (Downy mildew of grapevine).